Here is a 486-residue protein sequence, read N- to C-terminus: Probable transporter MCH1 (486 aa).

The next 6 helical transmembrane spans lie at Ile31–Leu51, Phe69–Ala89, Cys91–Val111, Phe132–Leu152, Leu164–Met184, and Phe204–Ser224. Residues Glu236 to Asp260 are disordered. A helical transmembrane segment spans residues Phe280–Ile300. Residue Asn322 is glycosylated (N-linked (GlcNAc...) asparagine). The next 2 helical transmembrane spans lie at Val327–Leu348 and Ile357–Val377. Asn390 is a glycosylation site (N-linked (GlcNAc...) asparagine). The next 2 helical transmembrane spans lie at Gly395–Gly415 and Thr417–Gly437. Asn457 carries an N-linked (GlcNAc...) asparagine glycan. Residues Leu458 to Trp478 form a helical membrane-spanning segment.

The protein belongs to the major facilitator superfamily.

The protein localises to the vacuole membrane. Functionally, probable transporter. The sequence is that of Probable transporter MCH1 (MCH1) from Debaryomyces hansenii (strain ATCC 36239 / CBS 767 / BCRC 21394 / JCM 1990 / NBRC 0083 / IGC 2968) (Yeast).